A 173-amino-acid chain; its full sequence is Probable DNA-directed RNA polymerase subunit delta (173 aa).

In terms of domain architecture, HTH HARE-type spans 14 to 81 (NSFIDLAYMA…GEYMWGLRDW (68 aa)). The disordered stretch occupies residues 113–173 (LLGEDEVEDE…DEFDDEEEEE (61 aa)). A compositionally biased stretch (acidic residues) spans 115–173 (GEDEVEDELDLLPSDGDEENVDTEDEEVEDELDEAGLVVEPDEEFEDEEDEFDDEEEEE).

It belongs to the RpoE family. RNAP is composed of a core of 2 alpha, a beta and a beta' subunits. The core is associated with a delta subunit and one of several sigma factors.

Functionally, participates in both the initiation and recycling phases of transcription. In the presence of the delta subunit, RNAP displays an increased specificity of transcription, a decreased affinity for nucleic acids, and an increased efficiency of RNA synthesis because of enhanced recycling. The polypeptide is Probable DNA-directed RNA polymerase subunit delta (Macrococcus caseolyticus (strain JCSC5402) (Macrococcoides caseolyticum)).